Consider the following 426-residue polypeptide: Glutamate-1-semialdehyde 2,1-aminomutase (426 aa).

The residue at position 265 (K265) is an N6-(pyridoxal phosphate)lysine.

This sequence belongs to the class-III pyridoxal-phosphate-dependent aminotransferase family. HemL subfamily. In terms of assembly, homodimer. Pyridoxal 5'-phosphate serves as cofactor.

The protein localises to the cytoplasm. The enzyme catalyses (S)-4-amino-5-oxopentanoate = 5-aminolevulinate. It functions in the pathway porphyrin-containing compound metabolism; protoporphyrin-IX biosynthesis; 5-aminolevulinate from L-glutamyl-tRNA(Glu): step 2/2. This chain is Glutamate-1-semialdehyde 2,1-aminomutase, found in Actinobacillus pleuropneumoniae serotype 5b (strain L20).